A 103-amino-acid polypeptide reads, in one-letter code: Nucleoid-associated protein CFF8240_0066 (103 aa).

The protein belongs to the YbaB/EbfC family. In terms of assembly, homodimer.

It localises to the cytoplasm. The protein resides in the nucleoid. Its function is as follows. Binds to DNA and alters its conformation. May be involved in regulation of gene expression, nucleoid organization and DNA protection. The chain is Nucleoid-associated protein CFF8240_0066 from Campylobacter fetus subsp. fetus (strain 82-40).